The following is a 410-amino-acid chain: MRQALLTRFLRYIKIDTQSKASNTRSPSSDSQLEFAVILKQELEQLGFERVELSHLGYLTASVPKTVDGVPCIGFIAHLDTAPDFCGANITPQIIENYDGEDILLGDSDLLSTEQFPSLLNYVGQTLITTDGTTLLGGDDKAGIAEIITALAHLIEHPEIPHGEIRLCFTPDEEIGRGAGHFDVPGFGAQWAYTIDGGELGELEYENFNAATAVIRAKGNNCHPGTAYGVMVNAQTMAARFHAKMPLQDTPEGSKDYDGFFHLVNMQGQTEEAELTYLIRDFDIDIFEQRKRWLTERVNSYNADLVVGSLEIEITDSYFNMKEQIIPHPHVVDIAKEAITSQGITPLVKPIRGGTDGARLSYMALPCPNIFTGGHNFHGKHEYICVESMEKAAGVILAICSLTCEKYLNR.

His-78 is a Zn(2+) binding site. Asp-80 is a catalytic residue. A Zn(2+)-binding site is contributed by Asp-139. Glu-173 serves as the catalytic Proton acceptor. The Zn(2+) site is built by Glu-174, Asp-196, and His-378.

Belongs to the peptidase M20B family. Zn(2+) is required as a cofactor.

The protein localises to the cytoplasm. It carries out the reaction Release of the N-terminal residue from a tripeptide.. Cleaves the N-terminal amino acid of tripeptides. The chain is Peptidase T from Shewanella woodyi (strain ATCC 51908 / MS32).